The sequence spans 545 residues: DNA mismatch repair protein MutL (545 aa).

A disordered region spans residues 517-545 (RRSGARGGGEARPRPQEESFPEAPLPREP).

Belongs to the DNA mismatch repair MutL/HexB family.

Its function is as follows. This protein is involved in the repair of mismatches in DNA. It is required for dam-dependent methyl-directed DNA mismatch repair. May act as a 'molecular matchmaker', a protein that promotes the formation of a stable complex between two or more DNA-binding proteins in an ATP-dependent manner without itself being part of a final effector complex. The protein is DNA mismatch repair protein MutL of Thermus thermophilus (strain ATCC 27634 / DSM 579 / HB8).